Reading from the N-terminus, the 245-residue chain is tRNA pseudouridine synthase A (245 aa).

The active-site Nucleophile is Asp-52. Substrate is bound at residue Tyr-111.

This sequence belongs to the tRNA pseudouridine synthase TruA family. As to quaternary structure, homodimer.

The enzyme catalyses uridine(38/39/40) in tRNA = pseudouridine(38/39/40) in tRNA. In terms of biological role, formation of pseudouridine at positions 38, 39 and 40 in the anticodon stem and loop of transfer RNAs. This chain is tRNA pseudouridine synthase A, found in Bradyrhizobium diazoefficiens (strain JCM 10833 / BCRC 13528 / IAM 13628 / NBRC 14792 / USDA 110).